A 358-amino-acid polypeptide reads, in one-letter code: Stearoyl-CoA desaturase 2 (358 aa).

At 1-71 (MPAHILQEIS…EGPPPKLEYV (71 aa)) the chain is on the cytoplasmic side. Residues 16-39 (TTTITAPPSGGQQNGGEKFEKSSH) form a disordered region. A helical transmembrane segment spans residues 72–92 (WRNIILMALLHLGALYGITLV). Residue Asn-74 participates in substrate binding. The Lumenal portion of the chain corresponds to 93-96 (PSCK). Residues 97–117 (LYTCLFAYLYYVISALGITAG) traverse the membrane as a helical segment. Residues 118 to 216 (AHRLWSHRTY…EKLVMFQRRY (99 aa)) are Cytoplasmic-facing. The Fe cation site is built by His-119 and His-124. Residues 119-124 (HRLWSH) carry the Histidine box-1 motif. Substrate is bound by residues Asn-147, Arg-154, and Asp-155. Fe cation is bound by residues His-156, His-159, and His-160. A Histidine box-2 motif is present at residues 156–160 (HRAHH). The substrate site is built by Arg-187 and Lys-188. The helical transmembrane segment at 217-236 (YKPGLLLMCFVLPTLVPWYC) threads the bilayer. At 237-240 (WGET) the chain is on the lumenal side. A helical transmembrane segment spans residues 241–262 (FVNSLCVSTFLRYAVVLNATWL). A substrate-binding site is contributed by Trp-261. The Cytoplasmic portion of the chain corresponds to 263-358 (VNSAAHLYGY…RTGDGSCKSG (96 aa)). His-268, His-297, His-300, and His-301 together coordinate Fe cation. The short motif at 297 to 301 (HNYHH) is the Histidine box-3 element.

The protein belongs to the fatty acid desaturase type 1 family. The cofactor is Fe(2+). Detected in brain and skin. Highly expressed in brain, and detected at low levels in heart, stomach, lung and testis. Detected both in dermis and epidermis.

It is found in the endoplasmic reticulum membrane. Its subcellular location is the microsome membrane. The enzyme catalyses octadecanoyl-CoA + 2 Fe(II)-[cytochrome b5] + O2 + 2 H(+) = (9Z)-octadecenoyl-CoA + 2 Fe(III)-[cytochrome b5] + 2 H2O. It catalyses the reaction hexadecanoyl-CoA + 2 Fe(II)-[cytochrome b5] + O2 + 2 H(+) = (9Z)-hexadecenoyl-CoA + 2 Fe(III)-[cytochrome b5] + 2 H2O. Stearoyl-CoA desaturase that utilizes O(2) and electrons from reduced cytochrome b5 to introduce the first double bond into saturated fatty acyl-CoA substrates. Catalyzes the insertion of a cis double bond at the delta-9 position into fatty acyl-CoA substrates including palmitoyl-CoA and stearoyl-CoA. Gives rise to a mixture of 16:1 and 18:1 unsaturated fatty acids. Contributes to the biosynthesis of membrane phospholipids, cholesterol esters and triglycerides, especially during embryonic development and in neonates. Important for normal permeability barrier function of the skin in neonates. This chain is Stearoyl-CoA desaturase 2 (Scd2), found in Mus musculus (Mouse).